The sequence spans 353 residues: Methylthioribose-1-phosphate isomerase (353 aa).

Residues 51–53, R94, and Q199 each bind substrate; that span reads RGA. D240 functions as the Proton donor in the catalytic mechanism. A substrate-binding site is contributed by 250–251; the sequence is NK.

This sequence belongs to the eIF-2B alpha/beta/delta subunits family. MtnA subfamily. Homodimer.

The enzyme catalyses 5-(methylsulfanyl)-alpha-D-ribose 1-phosphate = 5-(methylsulfanyl)-D-ribulose 1-phosphate. The protein operates within amino-acid biosynthesis; L-methionine biosynthesis via salvage pathway; L-methionine from S-methyl-5-thio-alpha-D-ribose 1-phosphate: step 1/6. In terms of biological role, catalyzes the interconversion of methylthioribose-1-phosphate (MTR-1-P) into methylthioribulose-1-phosphate (MTRu-1-P). This Bacillus velezensis (strain DSM 23117 / BGSC 10A6 / LMG 26770 / FZB42) (Bacillus amyloliquefaciens subsp. plantarum) protein is Methylthioribose-1-phosphate isomerase.